Consider the following 206-residue polypeptide: Nucleoside triphosphate pyrophosphatase (206 aa).

Residue Asp-76 is the Proton acceptor of the active site.

It belongs to the Maf family. A divalent metal cation is required as a cofactor.

It is found in the cytoplasm. The enzyme catalyses a ribonucleoside 5'-triphosphate + H2O = a ribonucleoside 5'-phosphate + diphosphate + H(+). It catalyses the reaction a 2'-deoxyribonucleoside 5'-triphosphate + H2O = a 2'-deoxyribonucleoside 5'-phosphate + diphosphate + H(+). Its function is as follows. Nucleoside triphosphate pyrophosphatase. May have a dual role in cell division arrest and in preventing the incorporation of modified nucleotides into cellular nucleic acids. The protein is Nucleoside triphosphate pyrophosphatase of Streptomyces coelicolor (strain ATCC BAA-471 / A3(2) / M145).